A 443-amino-acid chain; its full sequence is Chromosomal replication initiator protein DnaA (443 aa).

Residues 1-76 are domain I, interacts with DnaA modulators; sequence MMDAWPRCLE…GNGEVALAVG (76 aa). Positions 76-105 are domain II; it reads GSRPRAPEPAPAPVAATIAPQAAPIAPFAG. The domain III, AAA+ region stretch occupies residues 106-323; the sequence is NLDSHYTFAN…GALNTLVARA (218 aa). Positions 151, 153, 154, and 155 each coordinate ATP. The interval 324 to 443 is domain IV, binds dsDNA; it reads NFTGRSITVE…WEKLIRKLSE (120 aa).

It belongs to the DnaA family. In terms of assembly, oligomerizes as a right-handed, spiral filament on DNA at oriC.

The protein localises to the cytoplasm. Plays an essential role in the initiation and regulation of chromosomal replication. ATP-DnaA binds to the origin of replication (oriC) to initiate formation of the DNA replication initiation complex once per cell cycle. Binds the DnaA box (a 9 base pair repeat at the origin) and separates the double-stranded (ds)DNA. Forms a right-handed helical filament on oriC DNA; dsDNA binds to the exterior of the filament while single-stranded (ss)DNA is stabiized in the filament's interior. The ATP-DnaA-oriC complex binds and stabilizes one strand of the AT-rich DNA unwinding element (DUE), permitting loading of DNA polymerase. After initiation quickly degrades to an ADP-DnaA complex that is not apt for DNA replication. Binds acidic phospholipids. This is Chromosomal replication initiator protein DnaA from Xanthomonas oryzae pv. oryzae (strain KACC10331 / KXO85).